Here is an 880-residue protein sequence, read N- to C-terminus: Alanine--tRNA ligase (880 aa).

Zn(2+)-binding residues include His-571, His-575, Cys-673, and His-677.

Belongs to the class-II aminoacyl-tRNA synthetase family. Zn(2+) serves as cofactor.

Its subcellular location is the cytoplasm. The catalysed reaction is tRNA(Ala) + L-alanine + ATP = L-alanyl-tRNA(Ala) + AMP + diphosphate. Catalyzes the attachment of alanine to tRNA(Ala) in a two-step reaction: alanine is first activated by ATP to form Ala-AMP and then transferred to the acceptor end of tRNA(Ala). Also edits incorrectly charged Ser-tRNA(Ala) and Gly-tRNA(Ala) via its editing domain. This chain is Alanine--tRNA ligase, found in Oleidesulfovibrio alaskensis (strain ATCC BAA-1058 / DSM 17464 / G20) (Desulfovibrio alaskensis).